The sequence spans 396 residues: Elongation factor Tu 2 (396 aa).

A tr-type G domain is found at 10–206 (KPHVNVGTIG…AIDSYIPEPE (197 aa)). The segment at 19 to 26 (GHIDHGKT) is G1. 19–26 (GHIDHGKT) serves as a coordination point for GTP. Thr-26 serves as a coordination point for Mg(2+). The tract at residues 60 to 64 (GITIA) is G2. The interval 81-84 (DCPG) is G3. Residues 81–85 (DCPGH) and 136–139 (NKCD) contribute to the GTP site. Residues 136-139 (NKCD) are G4. The interval 174 to 176 (SAL) is G5.

The protein belongs to the TRAFAC class translation factor GTPase superfamily. Classic translation factor GTPase family. EF-Tu/EF-1A subfamily. Monomer.

It localises to the cytoplasm. The enzyme catalyses GTP + H2O = GDP + phosphate + H(+). Functionally, GTP hydrolase that promotes the GTP-dependent binding of aminoacyl-tRNA to the A-site of ribosomes during protein biosynthesis. This Desulfotalea psychrophila (strain LSv54 / DSM 12343) protein is Elongation factor Tu 2.